Reading from the N-terminus, the 83-residue chain is Arminin 4364 (83 aa).

A signal peptide spans 1-18 (MKTVFAILFLAFIALTYA). The propeptide occupies 19 to 55 (RSYEDVKEEIKNEVEKEILEDLEKETDELNERKINDA). Val80 bears the Valine amide mark.

Belongs to the arminin family. Expressed in entodermal epithelium along the body column.

It is found in the secreted. The protein resides in the target cell membrane. In terms of biological role, antimicrobial peptide with a broad-spectrum antimicrobial activity. Keeps its antibacterial activity under a wide range of salt concentrations that mimic physiological conditions of human blood, which is surprising, since Hydra is an obligate freshwater animal with nearly no salt tolerance. Does not affect red blood cells. In Hydra vulgaris (Hydra), this protein is Arminin 4364.